Reading from the N-terminus, the 880-residue chain is DNA polymerase I (880 aa).

The 5'-3' exonuclease domain maps to 174–268 (TPEQIIDMKG…SGLEYQGFNR (95 aa)). The region spanning 302–470 (DINVKTVTDV…LREKLVQELE (169 aa)) is the 3'-5' exonuclease domain.

It belongs to the DNA polymerase type-A family. As to quaternary structure, single-chain monomer with multiple functions.

The catalysed reaction is DNA(n) + a 2'-deoxyribonucleoside 5'-triphosphate = DNA(n+1) + diphosphate. In addition to polymerase activity, this DNA polymerase exhibits 3'-5' and 5'-3' exonuclease activity. In Bacillus subtilis (strain 168), this protein is DNA polymerase I (polA).